The sequence spans 509 residues: Movement protein (509 aa).

The protein resides in the host cell junction. The protein localises to the host plasmodesma. It is found in the host cytoplasm. Its function is as follows. Transports viral genome to neighboring plant cells directly through plasmosdesmata, without any budding. The movement protein allows efficient cell to cell propagation, by bypassing the host cell wall barrier. Increases virus accumulation and symptom severity. This chain is Movement protein, found in Rice dwarf virus (isolate Akita) (RDV).